The chain runs to 508 residues: MFLHILCLLAGQALADDYRPVFHFVPEKNWMNEPNGLIKIGSTWHLFYQHNPTANVWGNLNWGHATSSDLVHWTHEPLAITSENGIEAFTGTSYYDAENTSGLGTSDNPPYLAWYTGYFPSNGTQDQRLAFSIDAGETWTKFEGNPVISAAQEAPHDATGGLETRDPKVFFHADSGKWIMVLAHGGQNKMSFWTSVDAKRWSWASDLTSTQVPGLPSAVKGWEVPDMFEVPVHGTDKTTWVLIFTPAEGSPAGGNGVLALTGSFDGTVFHPNPVNVSTLWLDYGRDFDGALSWENLPDSDGHRILAAISNSYGANPPTNTWKGMLSFPRTLSLHQSQTGQYFLQQPVSNLDTVSTPLVSVKNQTIAPGQVLLSSVRGTALDIRIAFSANAGTVLSLAVRKAGSQETVIQYRQSDATLSVDRTTSGLTSYDPAAGGVHTAPLRPDASGVVQIRALVDTCSVEVFGGQGEVVISDLIFPDETSDGLALQVIGGTAVLRSLEKFPRLGAVL.

The N-terminal stretch at 1–15 (MFLHILCLLAGQALA) is a signal peptide. N-linked (GlcNAc...) asparagine glycosylation is found at N99, N122, N275, and N362.

It belongs to the glycosyl hydrolase 32 family.

The chain is Putative glycosyl hydrolase ecdF from Aspergillus rugulosus (Emericella rugulosa).